A 348-amino-acid chain; its full sequence is UDP-3-O-acylglucosamine N-acyltransferase (348 aa).

Catalysis depends on H257, which acts as the Proton acceptor.

It belongs to the transferase hexapeptide repeat family. LpxD subfamily. In terms of assembly, homotrimer.

It catalyses the reaction a UDP-3-O-[(3R)-3-hydroxyacyl]-alpha-D-glucosamine + a (3R)-hydroxyacyl-[ACP] = a UDP-2-N,3-O-bis[(3R)-3-hydroxyacyl]-alpha-D-glucosamine + holo-[ACP] + H(+). The protein operates within bacterial outer membrane biogenesis; LPS lipid A biosynthesis. Catalyzes the N-acylation of UDP-3-O-acylglucosamine using 3-hydroxyacyl-ACP as the acyl donor. Is involved in the biosynthesis of lipid A, a phosphorylated glycolipid that anchors the lipopolysaccharide to the outer membrane of the cell. The protein is UDP-3-O-acylglucosamine N-acyltransferase of Bartonella henselae (strain ATCC 49882 / DSM 28221 / CCUG 30454 / Houston 1) (Rochalimaea henselae).